Reading from the N-terminus, the 509-residue chain is Photosystem II CP47 reaction center protein (509 aa).

6 helical membrane-spanning segments follow: residues 21 to 36, 101 to 115, 140 to 156, 203 to 218, 237 to 252, and 457 to 472; these read AVHLMHTALVAGWAGS, IILSGMCFLAAIWHW, GIHLFLSGLLCFGFGAF, IAAGIFGIFAGIFHLT, VLSSSIAAVFFAAFVT, and NFALLFFFGHLWHGGR.

The protein belongs to the PsbB/PsbC family. PsbB subfamily. As to quaternary structure, PSII is composed of 1 copy each of membrane proteins PsbA, PsbB, PsbC, PsbD, PsbE, PsbF, PsbH, PsbI, PsbJ, PsbK, PsbL, PsbM, PsbT, PsbX, PsbY, PsbZ, Psb30/Ycf12, at least 3 peripheral proteins of the oxygen-evolving complex and a large number of cofactors. It forms dimeric complexes. Binds multiple chlorophylls. PSII binds additional chlorophylls, carotenoids and specific lipids. serves as cofactor.

The protein resides in the plastid. It is found in the chloroplast thylakoid membrane. Its function is as follows. One of the components of the core complex of photosystem II (PSII). It binds chlorophyll and helps catalyze the primary light-induced photochemical processes of PSII. PSII is a light-driven water:plastoquinone oxidoreductase, using light energy to abstract electrons from H(2)O, generating O(2) and a proton gradient subsequently used for ATP formation. The polypeptide is Photosystem II CP47 reaction center protein (Trieres chinensis (Marine centric diatom)).